The primary structure comprises 175 residues: Glycine-rich RNA-binding protein 1 (175 aa).

The RRM domain maps to 3–81; sequence AKVYVGNLSW…RRIRVNMANS (79 aa). The disordered stretch occupies residues 114–175; sequence GQPGGFQQPG…GYGGYNGQSQ (62 aa). Over residues 122-131 the composition is skewed to low complexity; that stretch reads PGGFQQQGGY. Residues 132–141 show a composition bias toward gly residues; the sequence is PQQGGYGGYQ. The segment covering 142-162 has biased composition (low complexity); the sequence is QPGFQPQQGGYGAPQQGYGAP. Residues 163 to 175 are compositionally biased toward gly residues; the sequence is QQGGYGGYNGQSQ.

This sequence belongs to the glycine-rich RNA-binding protein family. In terms of assembly, part of large ribonucleoprotein complexes (mRNPs) containing RNA-binding proteins RRM4 and PAB1, endosome-binding protein UPA1, core scaffold protein UPA2 and associated factor GRP1.

Its subcellular location is the endosome. Its function is as follows. Component of endosomal mRNA transport that regulates polarity of the infectious hyphae by transporting a broad spectrum of cargo mRNAs from the nucleus to cell poles. The protein is Glycine-rich RNA-binding protein 1 of Mycosarcoma maydis (Corn smut fungus).